Reading from the N-terminus, the 156-residue chain is MPRRRVIGQRKILPDPKFGSELLAKFVNILMVDGKKSTAEAIVYSALETLAQRSGKEHLEAFELALDNVRPTVEVKSRRVGGSTYQVPVEVRPVRRNALAMRWIVEAARKRGDKSMALRLANELSDAAENKGTAVKKREDVHRMAEANKAFAHYRW.

It belongs to the universal ribosomal protein uS7 family. In terms of assembly, part of the 30S ribosomal subunit. Contacts proteins S9 and S11.

Its function is as follows. One of the primary rRNA binding proteins, it binds directly to 16S rRNA where it nucleates assembly of the head domain of the 30S subunit. Is located at the subunit interface close to the decoding center, probably blocks exit of the E-site tRNA. The protein is Small ribosomal subunit protein uS7 of Photorhabdus laumondii subsp. laumondii (strain DSM 15139 / CIP 105565 / TT01) (Photorhabdus luminescens subsp. laumondii).